A 230-amino-acid polypeptide reads, in one-letter code: CDP-diacylglycerol--inositol 3-phosphatidyltransferase (230 aa).

The Cytoplasmic segment spans residues 1 to 28; that stretch reads MPSAKSSDLSPTKTNLESTTKQKVSVQD. Residues 29-51 traverse the membrane as a helical segment; the sequence is IFLYIPNLIGYLRIITAIISFLC. Residues 52 to 57 are Lumenal-facing; the sequence is MANHPV. Residues 58 to 77 form a helical membrane-spanning segment; that stretch reads ATLIFYGISGFLDAFDGYAA. Residues Asp-70 and Asp-73 each contribute to the Mg(2+) site. Residues Gly-74, Arg-78, and Thr-84 each coordinate a CDP-1,2-diacyl-sn-glycerol. The Cytoplasmic portion of the chain corresponds to 78 to 89; that stretch reads RKFNQGTRFGAV. Residues 90–110 traverse the membrane as a helical segment; the sequence is LDMVTDRCATSSLIVYLGVLY. Mg(2+) contacts are provided by Asp-91 and Asp-95. The active-site Proton acceptor is Asp-95. At 111–112 the chain is on the lumenal side; it reads PQ. The helical transmembrane segment at 113–133 threads the bilayer; the sequence is YTVFWQILVSLDLSSHYMHMY. Residues 134–161 lie on the Cytoplasmic side of the membrane; that stretch reads AMLSAGSTSHKNVDETQSKLLSLYYNNR. A helical membrane pass occupies residues 162 to 182; it reads LVLFFVCLINELFYMAVYLHY. At 183-184 the chain is on the lumenal side; that stretch reads YK. The chain crosses the membrane as a helical span at residues 185–205; that stretch reads FFWLGTVMLVASTPIWLFKQI. Topologically, residues 206-230 are cytoplasmic; sequence ANIIQLKNASLILARMDAHDHSKRD.

It belongs to the CDP-alcohol phosphatidyltransferase class-I family. It depends on Mn(2+) as a cofactor. Mg(2+) is required as a cofactor.

It is found in the endoplasmic reticulum membrane. It catalyses the reaction a CDP-1,2-diacyl-sn-glycerol + myo-inositol = a 1,2-diacyl-sn-glycero-3-phospho-(1D-myo-inositol) + CMP + H(+). With respect to regulation, inhibited by calcium and zinc ions. Inhibited by nucleoside triphosphates and diphosphates. Its function is as follows. Catalyzes the synthesis of phosphatidylinositol (PtdIns). Required for proper membrane dynamics and cell wall integrity. The polypeptide is CDP-diacylglycerol--inositol 3-phosphatidyltransferase (Candida albicans (strain SC5314 / ATCC MYA-2876) (Yeast)).